Consider the following 293-residue polypeptide: NAD kinase (293 aa).

Asp-72 (proton acceptor) is an active-site residue. NAD(+) is bound by residues 72–73 (DG), 146–147 (ND), Arg-157, Arg-174, Asp-176, 187–192 (TAYALS), and Gln-247.

Belongs to the NAD kinase family. A divalent metal cation is required as a cofactor.

The protein resides in the cytoplasm. It carries out the reaction NAD(+) + ATP = ADP + NADP(+) + H(+). Functionally, involved in the regulation of the intracellular balance of NAD and NADP, and is a key enzyme in the biosynthesis of NADP. Catalyzes specifically the phosphorylation on 2'-hydroxyl of the adenosine moiety of NAD to yield NADP. The protein is NAD kinase of Teredinibacter turnerae (strain ATCC 39867 / T7901).